The following is a 431-amino-acid chain: Adenylosuccinate synthetase (431 aa).

GTP-binding positions include 15 to 21 and 43 to 45; these read GDEGKGK and GHT. The active-site Proton acceptor is aspartate 16. Aspartate 16 and glycine 43 together coordinate Mg(2+). IMP contacts are provided by residues 16-19, 41-44, threonine 135, arginine 149, asparagine 227, threonine 242, and arginine 306; these read DEGK and NAGH. Histidine 44 acts as the Proton donor in catalysis. Residue 302–308 coordinates substrate; the sequence is VTTGRKR. Residues arginine 308, 334 to 336, and 416 to 418 each bind GTP; these read KLD and GVG.

The protein belongs to the adenylosuccinate synthetase family. As to quaternary structure, homodimer. The cofactor is Mg(2+).

The protein resides in the cytoplasm. The enzyme catalyses IMP + L-aspartate + GTP = N(6)-(1,2-dicarboxyethyl)-AMP + GDP + phosphate + 2 H(+). Its pathway is purine metabolism; AMP biosynthesis via de novo pathway; AMP from IMP: step 1/2. Functionally, plays an important role in the de novo pathway and in the salvage pathway of purine nucleotide biosynthesis. Catalyzes the first committed step in the biosynthesis of AMP from IMP. The chain is Adenylosuccinate synthetase from Monosiga brevicollis (Choanoflagellate).